The primary structure comprises 223 residues: Ribonuclease 3 (223 aa).

The region spanning 4 to 127 (LEEFERNLGY…VMGAIYLEAG (124 aa)) is the RNase III domain. E40 is a Mg(2+) binding site. D44 is an active-site residue. Residues D113 and E116 each contribute to the Mg(2+) site. E116 is an active-site residue. Positions 154-223 (DYKTALQEVT…AKIALEKIKK (70 aa)) constitute a DRBM domain.

The protein belongs to the ribonuclease III family. Homodimer. It depends on Mg(2+) as a cofactor.

Its subcellular location is the cytoplasm. The enzyme catalyses Endonucleolytic cleavage to 5'-phosphomonoester.. Its function is as follows. Digests double-stranded RNA. Involved in the processing of primary rRNA transcript to yield the immediate precursors to the large and small rRNAs (23S and 16S). Processes some mRNAs, and tRNAs when they are encoded in the rRNA operon. Processes pre-crRNA and tracrRNA of type II CRISPR loci if present in the organism. This is Ribonuclease 3 from Campylobacter concisus (strain 13826).